A 131-amino-acid polypeptide reads, in one-letter code: Sperm microtubule inner protein 11 (131 aa).

Residues 18–44 (KKRNTTEETNQKEPEPTRLPPIISKDG) form a disordered region. Residues 21–33 (NTTEETNQKEPEP) show a composition bias toward basic and acidic residues.

As to quaternary structure, microtubule inner protein component of sperm flagellar doublet microtubules.

It is found in the cytoplasm. It localises to the cytoskeleton. Its subcellular location is the flagellum axoneme. In terms of biological role, microtubule inner protein (MIP) part of the dynein-decorated doublet microtubules (DMTs) in flagellum axoneme. May serve to reinforce and thus stabilize the microtubule structure in the sperm flagella. This chain is Sperm microtubule inner protein 11, found in Homo sapiens (Human).